A 405-amino-acid chain; its full sequence is MTKLRIAVQGCCHGQLNQIYKEVSRIHAKTPIDLLIILGDFQSIRDGQDFKSIAIPPKYQRLGDFISYYNNEIEAPVPTIFIGGNHESMRHLMLLPHGGYVAKNIFYMGYSNVIWFKGIRIGSLSGIWKEWDFNKQRPDWNDLENNNWKANIRNLYHVRISDIAPLFMIKHRIDIMLSHDWPNGVVYHGDTKHLLKLKPFFEQDIKEGKLGSPVTWQLLRDLRPQWWLSAHLHVRFMASIKHNKRSHEPPNKSTSKTKKNNNEIDLDLSSDEDERSGIMNCQEENEYDSKYGETRFLALDKCLPRRRWLEILEIEPDTSHASWKDENHRMFWDPEFINNLVICQKNKNLLSNKPFNSVNWIELSQSNREEGRDIDWENYAIPAYTLDIQKDEVRQTKAFISKFMT.

4 residues coordinate a divalent metal cation: Cys-11, His-13, Asp-40, and Asn-85. Residues 125 to 159 form a lariat recognition loop region; that stretch reads SGIWKEWDFNKQRPDWNDLENNNWKANIRNLYHVR. A divalent metal cation contacts are provided by His-179, His-231, and His-233. The segment at 242 to 277 is disordered; it reads HNKRSHEPPNKSTSKTKKNNNEIDLDLSSDEDERSG. Residues 264-274 show a composition bias toward acidic residues; the sequence is IDLDLSSDEDE. Ser-269 carries the phosphoserine modification.

The protein belongs to the lariat debranching enzyme family. The cofactor is Fe(2+). Requires Zn(2+) as cofactor. It depends on Mn(2+) as a cofactor.

The protein localises to the nucleus. The protein resides in the cytoplasm. Its activity is regulated as follows. Active in presence of diverse metals including Fe(2+), Zn(2+) and Mn(2+). Binds two metal cations in two adjacent alpha and beta metal-binding pockets. The activity is the highest with Fe(2+) bound to the 2 metal-binding sites. Activity is low with Zn(2+) and Mn(2+). Cleaves the 2'-5' phosphodiester linkage at the branch point of lariat intron pre-mRNAs after splicing and converts them into linear molecules that are subsequently degraded, thereby facilitating ribonucleotide turnover. It also participates in Ty1 retrovirus-like transposition via an RNA lariat intermediate in cDNA synthesis. In Saccharomyces cerevisiae (strain ATCC 204508 / S288c) (Baker's yeast), this protein is Lariat debranching enzyme (DBR1).